The primary structure comprises 507 residues: ATP synthase subunit alpha, chloroplastic (507 aa).

170–177 (GDRQTGKT) contributes to the ATP binding site. Thr257 carries the phosphothreonine modification.

This sequence belongs to the ATPase alpha/beta chains family. As to quaternary structure, F-type ATPases have 2 components, CF(1) - the catalytic core - and CF(0) - the membrane proton channel. CF(1) has five subunits: alpha(3), beta(3), gamma(1), delta(1), epsilon(1). CF(0) has four main subunits: a, b, b' and c.

It localises to the plastid. The protein resides in the chloroplast thylakoid membrane. The catalysed reaction is ATP + H2O + 4 H(+)(in) = ADP + phosphate + 5 H(+)(out). Produces ATP from ADP in the presence of a proton gradient across the membrane. The alpha chain is a regulatory subunit. The protein is ATP synthase subunit alpha, chloroplastic of Draba nemorosa (Woodland whitlowgrass).